The chain runs to 453 residues: Protein FAM117A (453 aa).

Residues Met1 to Arg25 are compositionally biased toward gly residues. The interval Met1–Arg45 is disordered. 2 positions are modified to phosphoserine: Ser29 and Ser67. A coiled-coil region spans residues Thr149–Glu175. Positions Lys159–Ser201 are disordered. Phosphoserine is present on residues Ser178, Ser193, Ser201, and Ser213. Over residues Ser269 to Pro278 the composition is skewed to low complexity. Residues Ser269–Pro320 are disordered. Residue Thr299 is modified to Phosphothreonine. Ser319 and Ser327 each carry phosphoserine. Position 354 is a phosphothreonine (Thr354). Residues Gly406–Pro416 are compositionally biased toward pro residues. The disordered stretch occupies residues Gly406 to Val453. Phosphoserine is present on residues Ser413 and Ser428.

It belongs to the FAM117 family.

The chain is Protein FAM117A (FAM117A) from Homo sapiens (Human).